Consider the following 205-residue polypeptide: Protein-L-isoaspartate O-methyltransferase (205 aa).

Serine 56 is a catalytic residue.

This sequence belongs to the methyltransferase superfamily. L-isoaspartyl/D-aspartyl protein methyltransferase family.

Its subcellular location is the cytoplasm. It catalyses the reaction [protein]-L-isoaspartate + S-adenosyl-L-methionine = [protein]-L-isoaspartate alpha-methyl ester + S-adenosyl-L-homocysteine. Functionally, catalyzes the methyl esterification of L-isoaspartyl residues in peptides and proteins that result from spontaneous decomposition of normal L-aspartyl and L-asparaginyl residues. It plays a role in the repair and/or degradation of damaged proteins. This Aeromonas salmonicida (strain A449) protein is Protein-L-isoaspartate O-methyltransferase.